The following is a 114-amino-acid chain: Protachykinin (114 aa).

The first 19 residues, 1 to 19 (MKFLLPSIVIFLVLCQVFG), serve as a signal peptide directing secretion. Residues 20-55 (EELGPKEDLDYWTGSNQVQDEWLQADPFREIIRRMT) constitute a propeptide that is removed on maturation. Residues Met67 and Met91 each carry the methionine amide modification.

This sequence belongs to the tachykinin family. As to expression, expressed in all parts of the brain, with robust expression in the olfactory bulbs and tracts, moderate expression in the hypothalamus and posterior brain, and weak expression in the telencephalon-preoptic region and optic tectum-thalamus. Also expressed in nerve fibers, intestine, testes and pituitary gland. Not expressed in the liver or kidneys.

Its subcellular location is the secreted. Functionally, tachykinins are active peptides which excite neurons, evoke behavioral responses, are potent vasodilators and secretagogues, and contract (directly or indirectly) many smooth muscles. Substance P produces a voltage-dependent inhibition of calcium current in retinal bipolar cells. It can enhance learning and memory, may regulate social approach and feeding behaviors, and can accelerate the functional recovery in postural balance in response to light after unilateral labyrinthectomy. The protein is Protachykinin of Carassius auratus (Goldfish).